Consider the following 353-residue polypeptide: Cyclic GMP-AMP synthase-like receptor (353 aa).

Residues S60 and 72-74 (EYD) contribute to the ATP site. Mg(2+) contacts are provided by E72, D74, and D183. D183 serves as a coordination point for GTP. K245 provides a ligand contact to ATP. L269 and E270 together coordinate Mn(2+).

This sequence belongs to the mab-21 family. The cofactor is Mg(2+). Mn(2+) serves as cofactor.

The catalysed reaction is GTP + ATP = 2',3'-cGAMP + 2 diphosphate. It catalyses the reaction GTP + ATP = pppGp(2'-5')A + diphosphate. It carries out the reaction pppGp(2'-5')A = 2',3'-cGAMP + diphosphate. Its function is as follows. Nucleotidyltransferase that catalyzes the formation of cyclic GMP-AMP (2',3'-cGAMP) from ATP and GTP and plays a key role in innate immunity. Acts as a key sensor of double-stranded RNA (dsRNA), the presence of dsRNA in the cytoplasm being a danger signal that triggers the immune responses. Directly binds dsRNA, activating the nucleotidyltransferase activity, leading to synthesis of 2',3'-cGAMP, a second messenger that binds to and activates Sting, thereby triggering the immune response via activation of the NF-kappa-B transcription factor. The polypeptide is Cyclic GMP-AMP synthase-like receptor (Nicrophorus vespilloides (Boreal carrion beetle)).